The primary structure comprises 502 residues: Maturase K (502 aa).

This sequence belongs to the intron maturase 2 family. MatK subfamily.

It localises to the plastid. The protein resides in the chloroplast. In terms of biological role, usually encoded in the trnK tRNA gene intron. Probably assists in splicing its own and other chloroplast group II introns. The polypeptide is Maturase K (Theobroma cacao (Cacao)).